The following is a 141-amino-acid chain: Large ribosomal subunit protein uL11 (141 aa).

It belongs to the universal ribosomal protein uL11 family. Part of the ribosomal stalk of the 50S ribosomal subunit. Interacts with L10 and the large rRNA to form the base of the stalk. L10 forms an elongated spine to which L12 dimers bind in a sequential fashion forming a multimeric L10(L12)X complex. One or more lysine residues are methylated.

Its function is as follows. Forms part of the ribosomal stalk which helps the ribosome interact with GTP-bound translation factors. The polypeptide is Large ribosomal subunit protein uL11 (Pelodictyon phaeoclathratiforme (strain DSM 5477 / BU-1)).